Here is a 359-residue protein sequence, read N- to C-terminus: WAT1-related protein At4g28040 (359 aa).

Transmembrane regions (helical) follow at residues 10-30 (LALV…KAAF), 37-57 (TVFV…ISFI), 66-86 (PSLG…GVTV), 103-123 (ACAM…IVGF), 133-153 (SVAK…MTFL), 170-190 (WLLG…WLIL), 204-224 (TSAC…LALG), 240-260 (SCCI…AWIV), 266-286 (VFSA…GALY), and 292-312 (YLGS…VLWG). Residues 18–131 (TSAGVALFTK…GFESIKRRSM (114 aa)) form the EamA 1 domain. The EamA 2 domain occupies 199–310 (PDHLYTSACT…AIILGLYIVL (112 aa)).

The protein belongs to the drug/metabolite transporter (DMT) superfamily. Plant drug/metabolite exporter (P-DME) (TC 2.A.7.4) family.

Its subcellular location is the membrane. In Arabidopsis thaliana (Mouse-ear cress), this protein is WAT1-related protein At4g28040.